A 304-amino-acid polypeptide reads, in one-letter code: Kazal-type serine protease inhibitor domain-containing protein 1 (304 aa).

The signal sequence occupies residues 1-30 (MLPPPRPAAALALPVLLLLLVVLTPPPTGA). One can recognise an IGFBP N-terminal domain in the interval 49–129 (EGEGCAPCRP…EVPEPLCACR (81 aa)). 7 disulfides stabilise this stretch: Cys53/Cys76, Cys56/Cys78, Cys61/Cys79, Cys67/Cys82, Cys90/Cys108, Cys102/Cys126, and Cys135/Cys168. The region spanning 120–170 (EVPEPLCACRSQSPLCGSDGHTYSQICRLQEAARARPDANLTVAHPGPCES) is the Kazal-like domain. 2 N-linked (GlcNAc...) asparagine glycosylation sites follow: Asn159 and Asn183. In terms of domain architecture, Ig-like C2-type spans 172–269 (PQIVSHPYDT…GQVEAPASLT (98 aa)). Cysteines 193 and 253 form a disulfide. The N-linked (GlcNAc...) asparagine glycan is linked to Asn277.

Its subcellular location is the secreted. The protein localises to the extracellular space. It is found in the extracellular matrix. Involved in the proliferation of osteoblasts during bone formation and bone regeneration. Promotes matrix assembly. This Homo sapiens (Human) protein is Kazal-type serine protease inhibitor domain-containing protein 1 (KAZALD1).